The sequence spans 461 residues: MRTDWVAKRKNDPIRTQMHYARKGIITEEMHYIAKRESISPELIRSEVARGRMIIPANVNHANLEPMCIGVASKCKINSNIGNSSVVSDIAGELEKLEYSVKYGADTVMDLSTGGDIPAIRKAIIGASPIPIGTVPIYEALSRVRRVEDLSAQVMLEVIEEQAEQGVDYMTIHAGILVQHIPLTTKRVTGIVSRGGSILAEWMVKNHKQNFLYECFEDICKILQKHDVSFSLGDGLRPGSIADASDAAQFAELKTLGELTQVAWKHDVQTMIEGPGHIPMDQIEMQVIKEKELCFEAPFYTLGPLVTDIAPGYDHITSAIGAAMIGWYGASMLCYVTPKEHLGLPNREDVKAGIIAYKIAAHAADIARHRPGVRDRDDALSRARYRFDWKEQFALSLDPETARSMHDETLPEDGFKDAHFCSMCGPKFCSMNISAKVESFTADDAAAVLSGAAPESLVNIE.

Substrate is bound by residues asparagine 80, methionine 109, tyrosine 138, histidine 173, 193–195 (SRG), 234–237 (DGLR), and glutamate 273. Residue histidine 277 participates in Zn(2+) binding. Residue tyrosine 300 coordinates substrate. Histidine 341 provides a ligand contact to Zn(2+). [4Fe-4S] cluster contacts are provided by cysteine 421, cysteine 424, and cysteine 429.

It belongs to the ThiC family. [4Fe-4S] cluster is required as a cofactor.

The enzyme catalyses 5-amino-1-(5-phospho-beta-D-ribosyl)imidazole + S-adenosyl-L-methionine = 4-amino-2-methyl-5-(phosphooxymethyl)pyrimidine + CO + 5'-deoxyadenosine + formate + L-methionine + 3 H(+). It functions in the pathway cofactor biosynthesis; thiamine diphosphate biosynthesis. In terms of biological role, catalyzes the synthesis of the hydroxymethylpyrimidine phosphate (HMP-P) moiety of thiamine from aminoimidazole ribotide (AIR) in a radical S-adenosyl-L-methionine (SAM)-dependent reaction. The chain is Phosphomethylpyrimidine synthase from Solibacter usitatus (strain Ellin6076).